A 141-amino-acid chain; its full sequence is Protein archease (141 aa).

The Ca(2+) site is built by D19 and D140.

Belongs to the archease family.

Activates the tRNA-splicing ligase complex by facilitating the enzymatic turnover of catalytic subunit RtcB. Acts by promoting the guanylylation of RtcB, a key intermediate step in tRNA ligation. Can also alter the NTP specificity of RtcB such that ATP, dGTP or ITP is used efficiently. The sequence is that of Protein archease from Thermoplasma acidophilum (strain ATCC 25905 / DSM 1728 / JCM 9062 / NBRC 15155 / AMRC-C165).